Here is a 130-residue protein sequence, read N- to C-terminus: Large ribosomal subunit protein bL12 (130 aa).

Belongs to the bacterial ribosomal protein bL12 family. Homodimer. Part of the ribosomal stalk of the 50S ribosomal subunit. Forms a multimeric L10(L12)X complex, where L10 forms an elongated spine to which 2 to 4 L12 dimers bind in a sequential fashion. Binds GTP-bound translation factors.

Functionally, forms part of the ribosomal stalk which helps the ribosome interact with GTP-bound translation factors. Is thus essential for accurate translation. This chain is Large ribosomal subunit protein bL12, found in Chlamydia muridarum (strain MoPn / Nigg).